We begin with the raw amino-acid sequence, 93 residues long: Co-chaperonin GroES (93 aa).

The protein belongs to the GroES chaperonin family. Heptamer of 7 subunits arranged in a ring. Interacts with the chaperonin GroEL.

It is found in the cytoplasm. Its function is as follows. Together with the chaperonin GroEL, plays an essential role in assisting protein folding. The GroEL-GroES system forms a nano-cage that allows encapsulation of the non-native substrate proteins and provides a physical environment optimized to promote and accelerate protein folding. GroES binds to the apical surface of the GroEL ring, thereby capping the opening of the GroEL channel. This Streptococcus gordonii protein is Co-chaperonin GroES.